A 137-amino-acid chain; its full sequence is Putative pre-16S rRNA nuclease (137 aa).

The protein belongs to the YqgF nuclease family.

Its subcellular location is the cytoplasm. Its function is as follows. Could be a nuclease involved in processing of the 5'-end of pre-16S rRNA. This chain is Putative pre-16S rRNA nuclease, found in Bacillus cereus (strain G9842).